Here is a 540-residue protein sequence, read N- to C-terminus: Extracellular matrix protein 1 (540 aa).

The first 19 residues, 1-19, serve as a signal peptide directing secretion; sequence MGTTARAALVLTYLAVASA. Disordered stretches follow at residues 41–85 and 120–175; these read VGYA…EATP and LQHP…PSPD. Composition is skewed to polar residues over residues 71-85 and 146-156; these read GQSQ…EATP and NAAQHCQQDRS. 2 consecutive repeat copies span residues 150-279 and 283-405. Residues 150-405 are 2 X approximate repeats; it reads HCQQDRSQGG…FARRAPYPNY (256 aa). N354 is a glycosylation site (N-linked (GlcNAc...) asparagine). The N-linked (GlcNAc...) (complex) asparagine glycan is linked to N444. The interval 515 to 540 is disordered; it reads ENAKGQGEQGSTGGTNISSTSEPKEE. The span at 528-540 shows a compositional bias: low complexity; it reads GTNISSTSEPKEE. An N-linked (GlcNAc...) asparagine glycan is attached at N530.

In terms of assembly, interacts (via C-terminus) with HSPG2 (via C-terminus). Interacts with EFEMP1/FBLN3 and LAMB3. Interacts with MMP9. Expressed in breast cancer tissues. Little or no expression observed in normal breast tissues. Expressed in skin; wide expression is observed throughout the dermis with minimal expression in the epidermis.

The protein localises to the secreted. The protein resides in the extracellular space. It localises to the extracellular matrix. Involved in endochondral bone formation as negative regulator of bone mineralization. Stimulates the proliferation of endothelial cells and promotes angiogenesis. Inhibits MMP9 proteolytic activity. The protein is Extracellular matrix protein 1 (ECM1) of Homo sapiens (Human).